Reading from the N-terminus, the 193-residue chain is Thymidine kinase (193 aa).

Residues 9-16 and 87-90 contribute to the ATP site; these read STMNAGKS and DEAN. E88 serves as the catalytic Proton acceptor. Residues C145, C147, C182, and H185 each coordinate Zn(2+).

It belongs to the thymidine kinase family. As to quaternary structure, homotetramer.

It is found in the cytoplasm. It catalyses the reaction thymidine + ATP = dTMP + ADP + H(+). This is Thymidine kinase from Agrobacterium fabrum (strain C58 / ATCC 33970) (Agrobacterium tumefaciens (strain C58)).